The primary structure comprises 32 residues: Natriuretic peptide Coa_NP1 (32 aa).

An intrachain disulfide couples Cys-8 to Cys-24.

The protein belongs to the natriuretic peptide family. Snake NP subfamily. Expressed by the venom gland.

Its subcellular location is the secreted. Functionally, snake venom natriuretic peptide that exhibits hypotensive and vasodepressor activity in rats. The polypeptide is Natriuretic peptide Coa_NP1 (Crotalus lutosus abyssus (Grand Canyon rattlesnake)).